Consider the following 313-residue polypeptide: Aspartate carbamoyltransferase catalytic subunit (313 aa).

The carbamoyl phosphate site is built by Arg53 and Thr54. Residue Lys82 participates in L-aspartate binding. Carbamoyl phosphate contacts are provided by Arg103, His131, and Gln134. L-aspartate-binding residues include Arg163 and Arg224. Residues Leu263 and Pro264 each coordinate carbamoyl phosphate.

Belongs to the aspartate/ornithine carbamoyltransferase superfamily. ATCase family. In terms of assembly, heterooligomer of catalytic and regulatory chains.

The catalysed reaction is carbamoyl phosphate + L-aspartate = N-carbamoyl-L-aspartate + phosphate + H(+). It participates in pyrimidine metabolism; UMP biosynthesis via de novo pathway; (S)-dihydroorotate from bicarbonate: step 2/3. Functionally, catalyzes the condensation of carbamoyl phosphate and aspartate to form carbamoyl aspartate and inorganic phosphate, the committed step in the de novo pyrimidine nucleotide biosynthesis pathway. In Halorubrum lacusprofundi (strain ATCC 49239 / DSM 5036 / JCM 8891 / ACAM 34), this protein is Aspartate carbamoyltransferase catalytic subunit.